Reading from the N-terminus, the 89-residue chain is Large ribosomal subunit protein bL27 (89 aa).

This sequence belongs to the bacterial ribosomal protein bL27 family.

The chain is Large ribosomal subunit protein bL27 from Cereibacter sphaeroides (strain ATCC 17029 / ATH 2.4.9) (Rhodobacter sphaeroides).